The following is a 380-amino-acid chain: MASVAELKEKHAAATASVNSLRERLRQRRQMLLDTDVERYSRTQGRTPVSFNPTDLVCCRTLQGHSGKVYSLDWTPEKNWIVSASQDGRLIVWNALTSQKTHAIKLHCPWVMTCAFAPNGQSVACGGLDSACSIFNLNSQADRDGNIPVSRILTGHKGYVSSCQYVPDQETRLITSSGDQTCVLWDVTTGQRISIFGGEFPSGHTADVLSLSINSSNSNMFVSGSCDATVRLWDIRIASRAVRTYHGHEGDINSVKFFPDGQRFGTGSDDGTCRLFDVRTGHQLQVYSREPDRNDNELPTVTSIAFSISGRLLFAGYSNGDCYVWDTLLAEVVLNLGNLQNSHEGRISCLGLSSDGSALCTGSWDKNLKIWAFSGHRKIV.

7 WD repeats span residues 64–94 (GHSGKVYSLDWTPEKNWIVSASQDGRLIVWN), 106–136 (LHCPWVMTCAFAPNGQSVACGGLDSACSIFN), 155–186 (GHKGYVSSCQYVPDQETRLITSSGDQTCVLWD), 203–234 (GHTADVLSLSINSSNSNMFVSGSCDATVRLWD), 247–277 (GHEGDINSVKFFPDGQRFGTGSDDGTCRLFD), 296–326 (NELPTVTSIAFSISGRLLFAGYSNGDCYVWD), and 342–372 (SHEGRISCLGLSSDGSALCTGSWDKNLKIWA).

It belongs to the WD repeat G protein beta family. G proteins are composed of 3 units, alpha, beta and gamma. Interacts with the gamma subunits RGG1 and RGG2.

Its subcellular location is the cell membrane. Guanine nucleotide-binding proteins (G proteins) are involved as modulators or transducers in various transmembrane signaling systems. The beta and gamma chains are required for the GTPase activity, for replacement of GDP by GTP, and for G protein-effector interaction. The chain is Guanine nucleotide-binding protein subunit beta from Oryza sativa subsp. japonica (Rice).